Consider the following 407-residue polypeptide: Protein CNPPD1 (407 aa).

A helical transmembrane segment spans residues 233–253 (CLLAVAYVSSVALAVASVAVI).

The protein belongs to the CNPPD1 family.

Its subcellular location is the membrane. The polypeptide is Protein CNPPD1 (Cnppd1) (Mus musculus (Mouse)).